The chain runs to 802 residues: Ribosomal protein S6 kinase alpha-5 (802 aa).

Positions 1-22 (MEEEGGSSGGAAGTSADGGDGG) are enriched in gly residues. The segment at 1–23 (MEEEGGSSGGAAGTSADGGDGGE) is disordered. The Protein kinase 1 domain occupies 49–318 (FELLKVLGTG…ADEIKEHLFF (270 aa)). Residues 55 to 63 (LGTGAYGKV) and lysine 81 each bind ATP. Aspartate 177 serves as the catalytic Proton acceptor. Serine 212 is modified (phosphoserine; by autocatalysis). The region spanning 319–387 (QKINWDDLAA…VAPSILFKRN (69 aa)) is the AGC-kinase C-terminal domain. Serine 360 is modified (phosphoserine; by MAPK1, MAPK3 and MAPK14). Phosphoserine; by autocatalysis occurs at positions 376 and 381. The 262-residue stretch at 426-687 (DLKDKPLGEG…MSGLRYNEWL (262 aa)) folds into the Protein kinase 2 domain. Residues 432-440 (LGEGSFSIC) and lysine 455 each bind ATP. Aspartate 544 (proton acceptor) is an active-site residue. Threonine 581 bears the Phosphothreonine; by MAPK1, MAPK3 and MAPK14 mark. Phosphoserine is present on residues serine 647, serine 657, serine 691, and serine 695. Threonine 700 is subject to Phosphothreonine; by MAPK1, MAPK3 and MAPK14. The disordered stretch occupies residues 741-802 (AKRRKMKKTS…TLFQFSDSVA (62 aa)). The span at 749–779 (TSTSTETRSSSSESSHSSSSHSHGKTTPTKT) shows a compositional bias: low complexity. Residues serine 750, serine 752, and serine 758 each carry the phosphoserine; by autocatalysis modification. The segment covering 780-802 (LQPSNPADSNNPETLFQFSDSVA) has biased composition (polar residues). Serine 798 carries the post-translational modification Phosphoserine.

The protein belongs to the protein kinase superfamily. AGC Ser/Thr protein kinase family. S6 kinase subfamily. As to quaternary structure, forms a complex with either MAPK1/ERK2 or MAPK3/ERK1 in quiescent cells which transiently dissociates following mitogenic stimulation. Also associates with MAPK14/p38-alpha. Activated RPS6KA5 associates with and phosphorylates the NF-kappa-B p65 subunit RELA. Interacts with CREBBP and EP300. Mg(2+) serves as cofactor. In terms of processing, ser-376 and Thr-581 phosphorylation is required for kinase activity. Ser-376 and Ser-212 are autophosphorylated by the C-terminal kinase domain, and their phosphorylation is essential for the catalytic activity of the N-terminal kinase domain. Phosphorylated at Ser-360, Thr-581 and Thr-700 by MAPK1/ERK2, MAPK3/ERK1 and MAPK14/p38-alpha. Autophosphorylated at Ser-750, Ser-752 and Ser-758 by the N-terminal kinase domain. Post-translationally, ubiquitinated. Widely expressed with high levels in heart, brain and placenta. Less abundant in lung, kidney and liver.

The protein localises to the nucleus. It is found in the cytoplasm. It carries out the reaction L-seryl-[protein] + ATP = O-phospho-L-seryl-[protein] + ADP + H(+). The enzyme catalyses L-threonyl-[protein] + ATP = O-phospho-L-threonyl-[protein] + ADP + H(+). With respect to regulation, activated by phosphorylation at Ser-360, Thr-581 and Thr-700 by MAPK1/ERK2, MAPK3/ERK1 and MAPK14/p38-alpha, and by further autophosphorylation of Ser-212, Ser-376 and Ser-381 by the activated C-terminal kinase domain. The active N-terminal kinase domain finally phosphorylates downstream substrates, as well as Ser-750, Ser-752 and Ser-758 in its own C-terminal region. Functionally, serine/threonine-protein kinase that is required for the mitogen or stress-induced phosphorylation of the transcription factors CREB1 and ATF1 and for the regulation of the transcription factors RELA, STAT3 and ETV1/ER81, and that contributes to gene activation by histone phosphorylation and functions in the regulation of inflammatory genes. Phosphorylates CREB1 and ATF1 in response to mitogenic or stress stimuli such as UV-C irradiation, epidermal growth factor (EGF) and anisomycin. Plays an essential role in the control of RELA transcriptional activity in response to TNF and upon glucocorticoid, associates in the cytoplasm with the glucocorticoid receptor NR3C1 and contributes to RELA inhibition and repression of inflammatory gene expression. In skeletal myoblasts is required for phosphorylation of RELA at 'Ser-276' during oxidative stress. In erythropoietin-stimulated cells, is necessary for the 'Ser-727' phosphorylation of STAT3 and regulation of its transcriptional potential. Phosphorylates ETV1/ER81 at 'Ser-191' and 'Ser-216', and thereby regulates its ability to stimulate transcription, which may be important during development and breast tumor formation. Directly represses transcription via phosphorylation of 'Ser-1' of histone H2A. Phosphorylates 'Ser-10' of histone H3 in response to mitogenics, stress stimuli and EGF, which results in the transcriptional activation of several immediate early genes, including proto-oncogenes c-fos/FOS and c-jun/JUN. May also phosphorylate 'Ser-28' of histone H3. Mediates the mitogen- and stress-induced phosphorylation of high mobility group protein 1 (HMGN1/HMG14). In lipopolysaccharide-stimulated primary macrophages, acts downstream of the Toll-like receptor TLR4 to limit the production of pro-inflammatory cytokines. Functions probably by inducing transcription of the MAP kinase phosphatase DUSP1 and the anti-inflammatory cytokine interleukin 10 (IL10), via CREB1 and ATF1 transcription factors. Plays a role in neuronal cell death by mediating the downstream effects of excitotoxic injury. Phosphorylates TRIM7 at 'Ser-107' in response to growth factor signaling via the MEK/ERK pathway, thereby stimulating its ubiquitin ligase activity. This is Ribosomal protein S6 kinase alpha-5 (RPS6KA5) from Homo sapiens (Human).